A 299-amino-acid chain; its full sequence is Regucalcin (299 aa).

An a divalent metal cation-binding site is contributed by Glu-18. Substrate-binding residues include Arg-101, Asn-103, and Glu-121. The residue at position 144 (Lys-144) is an N6-succinyllysine. Asn-154 and Asp-204 together coordinate a divalent metal cation. The active-site Proton donor/acceptor is Asp-204. 2 positions are modified to N6-succinyllysine: Lys-244 and Lys-253.

It belongs to the SMP-30/CGR1 family. In terms of assembly, monomer. Zn(2+) serves as cofactor. Requires Mn(2+) as cofactor. Ca(2+) is required as a cofactor. It depends on Mg(2+) as a cofactor.

It is found in the cytoplasm. The enzyme catalyses D-glucono-1,5-lactone + H2O = D-gluconate + H(+). Functionally, gluconolactonase with low activity towards other sugar lactones, including gulonolactone and galactonolactone. Can also hydrolyze diisopropyl phosphorofluoridate and phenylacetate (in vitro). Calcium-binding protein. Modulates Ca(2+) signaling, and Ca(2+)-dependent cellular processes and enzyme activities. The protein is Regucalcin (RGN) of Pongo abelii (Sumatran orangutan).